A 207-amino-acid chain; its full sequence is Large ribosomal subunit protein bL25 (207 aa).

The protein belongs to the bacterial ribosomal protein bL25 family. CTC subfamily. In terms of assembly, part of the 50S ribosomal subunit; part of the 5S rRNA/L5/L18/L25 subcomplex. Contacts the 5S rRNA. Binds to the 5S rRNA independently of L5 and L18.

Its function is as follows. This is one of the proteins that binds to the 5S RNA in the ribosome where it forms part of the central protuberance. The polypeptide is Large ribosomal subunit protein bL25 (Dictyoglomus turgidum (strain DSM 6724 / Z-1310)).